Here is a 601-residue protein sequence, read N- to C-terminus: Elongation factor 4 (601 aa).

The region spanning 5 to 187 (IRKKNFCIIA…AICKHVPSPR (183 aa)) is the tr-type G domain. GTP-binding positions include 17–22 (DHGKST) and 134–137 (NKID).

It belongs to the TRAFAC class translation factor GTPase superfamily. Classic translation factor GTPase family. LepA subfamily.

It is found in the cell inner membrane. The catalysed reaction is GTP + H2O = GDP + phosphate + H(+). Functionally, required for accurate and efficient protein synthesis under certain stress conditions. May act as a fidelity factor of the translation reaction, by catalyzing a one-codon backward translocation of tRNAs on improperly translocated ribosomes. Back-translocation proceeds from a post-translocation (POST) complex to a pre-translocation (PRE) complex, thus giving elongation factor G a second chance to translocate the tRNAs correctly. Binds to ribosomes in a GTP-dependent manner. In Borrelia garinii subsp. bavariensis (strain ATCC BAA-2496 / DSM 23469 / PBi) (Borreliella bavariensis), this protein is Elongation factor 4.